The primary structure comprises 304 residues: Coenzyme PQQ synthesis protein B (304 aa).

The protein belongs to the PqqB family.

The protein operates within cofactor biosynthesis; pyrroloquinoline quinone biosynthesis. In terms of biological role, may be involved in the transport of PQQ or its precursor to the periplasm. The protein is Coenzyme PQQ synthesis protein B of Pseudomonas aeruginosa (strain UCBPP-PA14).